We begin with the raw amino-acid sequence, 87 residues long: U3-theraphotoxin-Hhn1e (87 aa).

Positions 1 to 24 (MVNMKASMFLTFAGLVLLFVVCYA) are cleaved as a signal peptide. Residues 25–52 (SESEEKEFPKGMLSSIFAVDNDFKQEER) constitute a propeptide that is removed on maturation. Intrachain disulfides connect Cys-54/Cys-67, Cys-61/Cys-72, and Cys-66/Cys-79.

The protein belongs to the neurotoxin 10 (Hwtx-1) family. 51 (Hntx-8) subfamily. Hntx-8 sub-subfamily. In terms of tissue distribution, expressed by the venom gland.

Its subcellular location is the secreted. Its function is as follows. Ion channel inhibitor. This is U3-theraphotoxin-Hhn1e from Cyriopagopus hainanus (Chinese bird spider).